A 141-amino-acid chain; its full sequence is MAKEVSAIVRLQIPAGQANPAPPVGPALGQHGVNIMAFCKEFNAATQKEAGNILPVVITIYKDKTFTFVTKSPPASILLKKAANIASGSKEPNRTKVGKVTKAQVKEIVKIKWKDLNASTEEAAMRMIEGTARNMGIEVVE.

This sequence belongs to the universal ribosomal protein uL11 family. As to quaternary structure, part of the ribosomal stalk of the 50S ribosomal subunit. Interacts with L10 and the large rRNA to form the base of the stalk. L10 forms an elongated spine to which L12 dimers bind in a sequential fashion forming a multimeric L10(L12)X complex. One or more lysine residues are methylated.

Functionally, forms part of the ribosomal stalk which helps the ribosome interact with GTP-bound translation factors. The polypeptide is Large ribosomal subunit protein uL11 (Methylacidiphilum infernorum (isolate V4) (Methylokorus infernorum (strain V4))).